We begin with the raw amino-acid sequence, 1321 residues long: Lysine-specific demethylase 3A (1321 aa).

Phosphoserine occurs at positions 264 and 325. 3 disordered regions span residues 307 to 336, 383 to 402, and 438 to 472; these read ATPP…IPQG, LTEP…QENR, and KHLE…GKKV. Residues 316-327 are compositionally biased toward polar residues; the sequence is QQSTPQAANSPP. Ser445 carries the post-translational modification Phosphoserine. The C6-type zinc finger occupies 662–687; the sequence is CDVCDTTIFNLHWVCPRCGFGVCVDC. A Phosphoserine modification is found at Ser766. An LXXLL motif motif is present at residues 885–889; that stretch reads LRNLL. Lys895 carries the post-translational modification N6-acetyllysine. One can recognise a JmjC domain in the interval 1058–1281; that stretch reads MPSRFDDLMA…HCFWLTQEFR (224 aa). Fe cation-binding residues include His1120, Asp1122, and His1249.

The protein belongs to the JHDM2 histone demethylase family. As to quaternary structure, interacts with VRK1. The cofactor is Fe(2+).

The protein resides in the cytoplasm. It is found in the nucleus. It carries out the reaction N(6),N(6)-dimethyl-L-lysyl(9)-[histone H3] + 2 2-oxoglutarate + 2 O2 = L-lysyl(9)-[histone H3] + 2 formaldehyde + 2 succinate + 2 CO2. Histone demethylase that specifically demethylates 'Lys-9' of histone H3, thereby playing a central role in histone code. Preferentially demethylates mono- and dimethylated H3 'Lys-9' residue, with a preference for dimethylated residue, while it has weak or no activity on trimethylated H3 'Lys-9'. Demethylation of Lys residue generates formaldehyde and succinate. Involved in hormone-dependent transcriptional activation, by participating in recruitment to androgen-receptor target genes, resulting in H3 'Lys-9' demethylation and transcriptional activation. Involved in spermatogenesis by regulating expression of target genes such as PRM1 and TNP1 which are required for packaging and condensation of sperm chromatin. Involved in obesity resistance through regulation of metabolic genes such as PPARA and UCP1. This chain is Lysine-specific demethylase 3A (KDM3A), found in Homo sapiens (Human).